A 330-amino-acid chain; its full sequence is 4-hydroxythreonine-4-phosphate dehydrogenase (330 aa).

Substrate contacts are provided by H134 and T135. A divalent metal cation contacts are provided by H163, H208, and H263. Substrate contacts are provided by K271, N280, and R289.

The protein belongs to the PdxA family. In terms of assembly, homodimer. Zn(2+) is required as a cofactor. The cofactor is Mg(2+). It depends on Co(2+) as a cofactor.

It localises to the cytoplasm. It carries out the reaction 4-(phosphooxy)-L-threonine + NAD(+) = 3-amino-2-oxopropyl phosphate + CO2 + NADH. Its pathway is cofactor biosynthesis; pyridoxine 5'-phosphate biosynthesis; pyridoxine 5'-phosphate from D-erythrose 4-phosphate: step 4/5. Catalyzes the NAD(P)-dependent oxidation of 4-(phosphooxy)-L-threonine (HTP) into 2-amino-3-oxo-4-(phosphooxy)butyric acid which spontaneously decarboxylates to form 3-amino-2-oxopropyl phosphate (AHAP). The chain is 4-hydroxythreonine-4-phosphate dehydrogenase from Methylococcus capsulatus (strain ATCC 33009 / NCIMB 11132 / Bath).